The following is a 183-amino-acid chain: Bifunctional protein PyrR (183 aa).

The short motif at 102-114 (VVLVDDVLYTGRT) is the PRPP-binding element.

The protein belongs to the purine/pyrimidine phosphoribosyltransferase family. PyrR subfamily. As to quaternary structure, homodimer and homohexamer; in equilibrium.

The catalysed reaction is UMP + diphosphate = 5-phospho-alpha-D-ribose 1-diphosphate + uracil. Regulates transcriptional attenuation of the pyrimidine nucleotide (pyr) operon by binding in a uridine-dependent manner to specific sites on pyr mRNA. This disrupts an antiterminator hairpin in the RNA and favors formation of a downstream transcription terminator, leading to a reduced expression of downstream genes. Functionally, also displays a weak uracil phosphoribosyltransferase activity which is not physiologically significant. The chain is Bifunctional protein PyrR from Listeria monocytogenes serotype 4a (strain HCC23).